The chain runs to 110 residues: Protein RnfH (110 aa).

The tract at residues 86-110 (RKRAAQQAKDQEEKKKAEKSANKEN) is disordered. The span at 94–110 (KDQEEKKKAEKSANKEN) shows a compositional bias: basic and acidic residues.

This sequence belongs to the UPF0125 (RnfH) family.

This is Protein RnfH from Mannheimia succiniciproducens (strain KCTC 0769BP / MBEL55E).